The primary structure comprises 367 residues: tRNA-specific 2-thiouridylase MnmA (367 aa).

ATP contacts are provided by residues Gly-13–Ser-20 and Met-39. Residues Asn-99–Asp-101 form an interaction with target base in tRNA region. Catalysis depends on Cys-104, which acts as the Nucleophile. Cysteines 104 and 200 form a disulfide. Gly-128 contributes to the ATP binding site. The interaction with tRNA stretch occupies residues Lys-150–Gln-152. Cys-200 functions as the Cysteine persulfide intermediate in the catalytic mechanism. Residues Arg-307–Tyr-308 are interaction with tRNA.

The protein belongs to the MnmA/TRMU family.

Its subcellular location is the cytoplasm. It catalyses the reaction S-sulfanyl-L-cysteinyl-[protein] + uridine(34) in tRNA + AH2 + ATP = 2-thiouridine(34) in tRNA + L-cysteinyl-[protein] + A + AMP + diphosphate + H(+). Its function is as follows. Catalyzes the 2-thiolation of uridine at the wobble position (U34) of tRNA, leading to the formation of s(2)U34. The chain is tRNA-specific 2-thiouridylase MnmA from Neisseria gonorrhoeae (strain ATCC 700825 / FA 1090).